A 359-amino-acid chain; its full sequence is N-acetylneuraminate-9-phosphate synthase (359 aa).

N6-acetyllysine occurs at positions 61, 74, and 79. The residue at position 275 (Ser275) is a Phosphoserine. Lys290 bears the N6-acetyllysine mark. An AFP-like domain is found at Ser294–His353.

As to expression, ubiquitous.

The protein resides in the cytoplasm. It carries out the reaction aldehydo-N-acetyl-D-mannosamine 6-phosphate + phosphoenolpyruvate + H2O = N-acetylneuraminate 9-phosphate + phosphate. In terms of biological role, catalyzes condensation of phosphoenolpyruvate (PEP) and N-acetylmannosamine 6-phosphate (ManNAc-6-P) to synthesize N-acetylneuraminate-9-phosphate (Neu5Ac-9-P). Neu5Ac-9-P is the phosphorylated forms of sialic acid N-acetylneuraminic acid (Neu5Ac). In contrast with human ortholog, has no detectable activity towards D-mannose 6-phosphate. This chain is N-acetylneuraminate-9-phosphate synthase, found in Mus musculus (Mouse).